The sequence spans 282 residues: UPF0761 membrane protein HAPS_1376 (282 aa).

The next 6 membrane-spanning stretches (helical) occupy residues 32 to 52 (LLSL…LPIF), 89 to 109 (MGII…SSID), 124 to 144 (VILS…FAGA), 170 to 190 (LLKF…YLIV), 202 to 222 (VGAL…IWYI), and 234 to 254 (ALAT…VVLL).

The protein belongs to the UPF0761 family.

It is found in the cell inner membrane. The protein is UPF0761 membrane protein HAPS_1376 of Glaesserella parasuis serovar 5 (strain SH0165) (Haemophilus parasuis).